A 136-amino-acid chain; its full sequence is uncharacterized protein (136 aa).

The tract at residues 1-33 (MRDHLPPGLPPDPFADDPCDPSAALEAVEPGQP) is disordered.

This sequence to M.leprae ML0386.

This is an uncharacterized protein from Mycobacterium tuberculosis (strain CDC 1551 / Oshkosh).